The chain runs to 424 residues: 26S proteasome regulatory subunit 6A homolog A (424 aa).

Residues 1–21 (MATPMVEDTSSFEEDQLASMS) form a disordered region. At Ala-2 the chain carries N-acetylalanine. Ser-19 bears the Phosphoserine mark. Position 212–219 (212–219 (GPPGTGKT)) interacts with ATP. Lys-235 is covalently cross-linked (Glycyl lysine isopeptide (Lys-Gly) (interchain with G-Cter in ubiquitin)). Thr-278 is subject to O-acetylthreonine. Residues Lys-279 and Lys-416 each participate in a glycyl lysine isopeptide (Lys-Gly) (interchain with G-Cter in ubiquitin) cross-link.

It belongs to the AAA ATPase family. In terms of assembly, component of the 19S regulatory particle (RP/PA700) base subcomplex of the 26S proteasome. The 26S proteasome is composed of a core protease (CP), known as the 20S proteasome, capped at one or both ends by the 19S regulatory particle (RP/PA700). The RP/PA700 complex is composed of at least 17 different subunits in two subcomplexes, the base and the lid, which form the portions proximal and distal to the 20S proteolytic core, respectively. As to expression, ubiquitous.

The protein resides in the cytoplasm. Its subcellular location is the nucleus. In terms of biological role, the 26S proteasome is involved in the ATP-dependent degradation of ubiquitinated proteins. The regulatory (or ATPase) complex confers ATP dependency and substrate specificity to the 26S complex. Interacts with transit peptides of proteins targeted to the chloroplast, and may be involved in the degradation of unimported plastid protein precursors. Plays a essential role in the gametophyte development. Involved in tolerance to zinc deficiency, possibly through alleviation of oxidative stresses or processing of poly-ubiquitinated proteins. This Arabidopsis thaliana (Mouse-ear cress) protein is 26S proteasome regulatory subunit 6A homolog A.